The primary structure comprises 585 residues: Arginine--tRNA ligase (585 aa).

Positions 131 to 141 (ANPTGPMHVGH) match the 'HIGH' region motif.

Belongs to the class-I aminoacyl-tRNA synthetase family. As to quaternary structure, monomer.

It is found in the cytoplasm. It catalyses the reaction tRNA(Arg) + L-arginine + ATP = L-arginyl-tRNA(Arg) + AMP + diphosphate. The protein is Arginine--tRNA ligase of Bartonella henselae (strain ATCC 49882 / DSM 28221 / CCUG 30454 / Houston 1) (Rochalimaea henselae).